We begin with the raw amino-acid sequence, 279 residues long: HTH-type transcriptional regulator HdfR (279 aa).

Positions 1–58 (MDTELLKTFLEVSRTRHFGRAAESLYLTQSAVSFRIRQLENQLGVNLFTRHRNNIRLT) constitute an HTH lysR-type domain. The segment at residues 18–37 (FGRAAESLYLTQSAVSFRIR) is a DNA-binding region (H-T-H motif).

This sequence belongs to the LysR transcriptional regulatory family.

Its function is as follows. Negatively regulates the transcription of the flagellar master operon flhDC by binding to the upstream region of the operon. The chain is HTH-type transcriptional regulator HdfR from Escherichia coli (strain SE11).